A 166-amino-acid polypeptide reads, in one-letter code: Transcription factor HES-5 (166 aa).

A bHLH domain is found at 16 to 72 (KNRLRKPVVEKMRRDRINSSIEQLKLLLEQEFARHQPNSKLEKADILEMAVSYLKHS). Positions 88–119 (YSEGYSWCLQEAVQFLTLHAASDTQMKLLYHF) constitute an Orange domain. Residues 125–144 (APAAPAKEPKAPGAAPPPAL) are disordered. Positions 163-166 (WRPW) match the WRPW motif motif.

Transcription repression requires formation of a complex with a corepressor protein of the Groucho/TLE family. In terms of tissue distribution, expressed in fetal heart and brain tumors.

The protein localises to the nucleus. Transcriptional repressor of genes that require a bHLH protein for their transcription. Plays an important role as neurogenesis negative regulator. In Homo sapiens (Human), this protein is Transcription factor HES-5 (HES5).